Reading from the N-terminus, the 101-residue chain is TrfB transcriptional repressor protein (101 aa).

A DNA-binding region (H-T-H motif) is located at residues 37–56 (QATFATSLGLTRGAVSQAVH).

Functionally, in conjunction with KorB, inhibits the transcription of kilA, trfA and korAB operons. In conjunction with KorC is responsible for the negative control of kilC and kilE operons. The protein is TrfB transcriptional repressor protein (trfB) of Escherichia coli.